Here is a 295-residue protein sequence, read N- to C-terminus: 4-hydroxy-tetrahydrodipicolinate synthase (295 aa).

Thr-47 is a binding site for pyruvate. Tyr-135 functions as the Proton donor/acceptor in the catalytic mechanism. Lys-163 functions as the Schiff-base intermediate with substrate in the catalytic mechanism. Ile-206 lines the pyruvate pocket.

The protein belongs to the DapA family. Homodimer.

Its subcellular location is the cytoplasm. It catalyses the reaction L-aspartate 4-semialdehyde + pyruvate = (2S,4S)-4-hydroxy-2,3,4,5-tetrahydrodipicolinate + H2O + H(+). Its pathway is amino-acid biosynthesis; L-lysine biosynthesis via DAP pathway; (S)-tetrahydrodipicolinate from L-aspartate: step 3/4. Catalyzes the condensation of (S)-aspartate-beta-semialdehyde [(S)-ASA] and pyruvate to 4-hydroxy-tetrahydrodipicolinate (HTPA). The polypeptide is 4-hydroxy-tetrahydrodipicolinate synthase (Staphylococcus aureus (strain Mu50 / ATCC 700699)).